Reading from the N-terminus, the 415-residue chain is uncharacterized protein (415 aa).

[4Fe-4S] cluster contacts are provided by C276 and C316.

In terms of assembly, homodimer. [4Fe-4S] cluster is required as a cofactor.

This is an uncharacterized protein from Methanocaldococcus jannaschii (strain ATCC 43067 / DSM 2661 / JAL-1 / JCM 10045 / NBRC 100440) (Methanococcus jannaschii).